Consider the following 442-residue polypeptide: MGITVLKNEGLDFHAKISTPLSEIDDDMQKELLDLTKKVKIAGFRAGKVPVSIVKKKYGTSIRNDIIERRINHWVNHVIKEHNLNIIGRPKIEELQNEPDKALEFTVKIEILPKITIPDLKKISLDRPKLEVKPKDVEEQLEKLATLTKSYTKESKVTIKDGDQVTIDAIGYIKDKTFDGGKLNDLKVVIGSNTLIPGFEKQLIGSKTGSEIDVNVTFPENYHAKDLAGKDARFVVQIKAVHTSEPTLIDDEFAKKFQSNNLEELRTHFAKQIENESEEAINTIMKMNLFDKLEKLLDFDVPESLLEQEKNILKSETDKDESLLKDKSSKEITEYYNKLALRRVRIGLLLAEYAKSKNLQLEPDDFKKVIIQQARNFPGQENMIFDFYKNNPKAIEALKGTALEDKVVQYIFNNEIKLKEKKYTKEELEKYLEEEEQRITLI.

One can recognise a PPIase FKBP-type domain in the interval 162–247 (GDQVTIDAIG…IKAVHTSEPT (86 aa)).

It belongs to the FKBP-type PPIase family. Tig subfamily.

It is found in the cytoplasm. It catalyses the reaction [protein]-peptidylproline (omega=180) = [protein]-peptidylproline (omega=0). In terms of biological role, involved in protein export. Acts as a chaperone by maintaining the newly synthesized protein in an open conformation. Functions as a peptidyl-prolyl cis-trans isomerase. This Rickettsia canadensis (strain McKiel) protein is Trigger factor.